We begin with the raw amino-acid sequence, 36 residues long: Pancreatic polypeptide (36 aa).

F36 is modified (phenylalanine amide).

This sequence belongs to the NPY family.

The protein resides in the secreted. Its function is as follows. Hormone secreted by pancreatic cells that acts as a regulator of pancreatic and gastrointestinal functions. This chain is Pancreatic polypeptide (ppy), found in Rana temporaria (European common frog).